The following is a 95-amino-acid chain: Aspartyl/glutamyl-tRNA(Asn/Gln) amidotransferase subunit C (95 aa).

This sequence belongs to the GatC family. As to quaternary structure, heterotrimer of A, B and C subunits.

The catalysed reaction is L-glutamyl-tRNA(Gln) + L-glutamine + ATP + H2O = L-glutaminyl-tRNA(Gln) + L-glutamate + ADP + phosphate + H(+). It carries out the reaction L-aspartyl-tRNA(Asn) + L-glutamine + ATP + H2O = L-asparaginyl-tRNA(Asn) + L-glutamate + ADP + phosphate + 2 H(+). Allows the formation of correctly charged Asn-tRNA(Asn) or Gln-tRNA(Gln) through the transamidation of misacylated Asp-tRNA(Asn) or Glu-tRNA(Gln) in organisms which lack either or both of asparaginyl-tRNA or glutaminyl-tRNA synthetases. The reaction takes place in the presence of glutamine and ATP through an activated phospho-Asp-tRNA(Asn) or phospho-Glu-tRNA(Gln). The sequence is that of Aspartyl/glutamyl-tRNA(Asn/Gln) amidotransferase subunit C from Geotalea daltonii (strain DSM 22248 / JCM 15807 / FRC-32) (Geobacter daltonii).